The sequence spans 384 residues: L-type lectin-like domain-containing protein C4F6.05c (384 aa).

A signal peptide spans Met-1–Ala-19. Residues Val-20 to Ile-224 form the L-type lectin-like domain. Over Val-20 to Asn-353 the chain is Extracellular. The segment at Pro-227 to Pro-251 is disordered. The chain crosses the membrane as a helical span at residues Leu-354–Val-374. Residues Arg-375–Leu-384 lie on the Cytoplasmic side of the membrane.

It localises to the membrane. The protein resides in the endoplasmic reticulum. The protein localises to the golgi apparatus. The protein is L-type lectin-like domain-containing protein C4F6.05c of Schizosaccharomyces pombe (strain 972 / ATCC 24843) (Fission yeast).